Reading from the N-terminus, the 20-residue chain is Cuticle-degrading protease-like protein (20 aa).

The tract at residues 1–20 (AIVEQQGAPXGLGRIINKXK) is disordered.

Belongs to the peptidase S8 family.

The protein localises to the secreted. In terms of biological role, capable of breaching the insect cuticle. In Metacordyceps chlamydosporia (Nematophagous fungus), this protein is Cuticle-degrading protease-like protein.